We begin with the raw amino-acid sequence, 305 residues long: Peroxisome assembly protein 26 (305 aa).

Positions 1–20 are disordered; that stretch reads MKSDSSTSAAPLRGLGGPLR. The Cytoplasmic portion of the chain corresponds to 1-246; sequence MKSDSSTSAA…RQLWDSAVSH (246 aa). A helical; Signal-anchor for type II membrane protein membrane pass occupies residues 247 to 267; it reads FFSLPFKKSLLAALILCLLVV. Residues 268 to 305 are Peroxisomal matrix-facing; the sequence is RFDPASPSSLHFLYKLAQLFRWIRKAAFSRLYQLRIRD.

Belongs to the peroxin-26 family. In terms of assembly, interacts (via its cytoplasmic domain) with PEX6; interaction is direct and is ATP-dependent. Interacts with PEX1; interaction is indirect and is mediated via interaction with PEX6. Widely expressed. Highly expressed in kidney, liver, brain and skeletal muscles. Expressed at intermediate level in pancreas, placenta and heart. Weakly expressed in lung.

The protein resides in the peroxisome membrane. In terms of biological role, peroxisomal docking factor that anchors PEX1 and PEX6 to peroxisome membranes. PEX26 is therefore required for the formation of the PEX1-PEX6 AAA ATPase complex, a complex that mediates the extraction of the PEX5 receptor from peroxisomal membrane. The chain is Peroxisome assembly protein 26 from Homo sapiens (Human).